Consider the following 67-residue polypeptide: Protein DsrB (67 aa).

Belongs to the DsrB family.

This chain is Protein DsrB, found in Pectobacterium carotovorum subsp. carotovorum (strain PC1).